Consider the following 596-residue polypeptide: Actin-histidine N-methyltransferase (596 aa).

S-adenosyl-L-methionine contacts are provided by residues arginine 75, 104–106, arginine 254, 275–279, and 325–327; these read EGY, DMCNH, and NGF. Positions 94–314 constitute an SET domain; the sequence is DGFEISNFAD…EGEQIYIFYG (221 aa). The segment at 556–596 is disordered; sequence QCKDLNGTQEDPPGGGAVVKEIEKHDPSAKRTEGEPKDAGK. Over residues 575-596 the composition is skewed to basic and acidic residues; sequence KEIEKHDPSAKRTEGEPKDAGK.

This sequence belongs to the class V-like SAM-binding methyltransferase superfamily. SETD3 actin-histidine methyltransferase family.

It localises to the cytoplasm. The enzyme catalyses L-histidyl-[protein] + S-adenosyl-L-methionine = N(tele)-methyl-L-histidyl-[protein] + S-adenosyl-L-homocysteine + H(+). Protein-histidine N-methyltransferase that specifically mediates 3-methylhistidine (tele-methylhistidine) methylation of actin at 'His-73'. Does not have protein-lysine N-methyltransferase activity and probably only catalyzes histidine methylation of actin. The polypeptide is Actin-histidine N-methyltransferase (Danio rerio (Zebrafish)).